A 453-amino-acid chain; its full sequence is Pup--protein ligase (453 aa).

Position 9 (glutamate 9) interacts with Mg(2+). Arginine 53 contributes to the ATP binding site. Tyrosine 55 serves as a coordination point for Mg(2+). Aspartate 57 functions as the Proton acceptor in the catalytic mechanism. Glutamate 63 serves as a coordination point for Mg(2+). The ATP site is built by threonine 66 and tryptophan 420.

This sequence belongs to the Pup ligase/Pup deamidase family. Pup-conjugating enzyme subfamily.

It carries out the reaction ATP + [prokaryotic ubiquitin-like protein]-L-glutamate + [protein]-L-lysine = ADP + phosphate + N(6)-([prokaryotic ubiquitin-like protein]-gamma-L-glutamyl)-[protein]-L-lysine.. Its pathway is protein degradation; proteasomal Pup-dependent pathway. It participates in protein modification; protein pupylation. Its function is as follows. Catalyzes the covalent attachment of the prokaryotic ubiquitin-like protein modifier Pup to the proteasomal substrate proteins, thereby targeting them for proteasomal degradation. This tagging system is termed pupylation. The ligation reaction involves the side-chain carboxylate of the C-terminal glutamate of Pup and the side-chain amino group of a substrate lysine. This Kineococcus radiotolerans (strain ATCC BAA-149 / DSM 14245 / SRS30216) protein is Pup--protein ligase.